Here is a 356-residue protein sequence, read N- to C-terminus: Branched-chain-amino-acid transaminase 1 (356 aa).

An N6-(pyridoxal phosphate)lysine modification is found at Lys-197.

This sequence belongs to the class-IV pyridoxal-phosphate-dependent aminotransferase family. The cofactor is pyridoxal 5'-phosphate.

It catalyses the reaction L-leucine + 2-oxoglutarate = 4-methyl-2-oxopentanoate + L-glutamate. The catalysed reaction is L-isoleucine + 2-oxoglutarate = (S)-3-methyl-2-oxopentanoate + L-glutamate. It carries out the reaction L-valine + 2-oxoglutarate = 3-methyl-2-oxobutanoate + L-glutamate. Its pathway is amino-acid biosynthesis; L-isoleucine biosynthesis; L-isoleucine from 2-oxobutanoate: step 4/4. The protein operates within amino-acid biosynthesis; L-leucine biosynthesis; L-leucine from 3-methyl-2-oxobutanoate: step 4/4. It participates in amino-acid biosynthesis; L-valine biosynthesis; L-valine from pyruvate: step 4/4. Its activity is regulated as follows. Inhibited by canaline. In terms of biological role, transaminates branched-chain amino acids and ketoglutarate. Involved in the final step of the methionine regeneration pathway, where ketomethiobutyrate (KMTB) is converted to methionine via a transamination. The amino donor preference is isoleucine, leucine, valine, phenylalanine, and tyrosine. In Bacillus subtilis (strain 168), this protein is Branched-chain-amino-acid transaminase 1 (ilvE).